An 89-amino-acid chain; its full sequence is MAISQERKDEIIKEYRVHETDTGSPEVQIAVLTAEINALNEHLRTHKKDHHSRRGLLKMVGRRRHLLNYLRKKDIQRYRELIKSLGIRR.

Belongs to the universal ribosomal protein uS15 family. In terms of assembly, part of the 30S ribosomal subunit. Forms a bridge to the 50S subunit in the 70S ribosome, contacting the 23S rRNA.

Functionally, one of the primary rRNA binding proteins, it binds directly to 16S rRNA where it helps nucleate assembly of the platform of the 30S subunit by binding and bridging several RNA helices of the 16S rRNA. Its function is as follows. Forms an intersubunit bridge (bridge B4) with the 23S rRNA of the 50S subunit in the ribosome. The chain is Small ribosomal subunit protein uS15 from Staphylococcus carnosus (strain TM300).